Consider the following 495-residue polypeptide: Probable cytochrome P450 4s3 (495 aa).

The heme site is built by E307 and C436.

It belongs to the cytochrome P450 family. It depends on heme as a cofactor.

It localises to the endoplasmic reticulum membrane. The protein localises to the microsome membrane. Functionally, may be involved in the metabolism of insect hormones and in the breakdown of synthetic insecticides. This Drosophila melanogaster (Fruit fly) protein is Probable cytochrome P450 4s3 (Cyp4s3).